The sequence spans 390 residues: Nuclear receptor subfamily 2 group F member 6 (390 aa).

Over residues 1–15 the composition is skewed to gly residues; it reads MAMVTGGWGGPGGDT. Positions 1 to 50 are disordered; it reads MAMVTGGWGGPGGDTNGVDKAGGSYPRATEDDSASPPGATSDAEPGDEER. S35 and S41 each carry phosphoserine. Residues 54–129 constitute a DNA-binding region (nuclear receptor); that stretch reads QVDCVVCGDK…VGMRKEAVQP (76 aa). 2 NR C4-type zinc fingers span residues 57–77 and 93–117; these read CVVC…CEGC and CRSN…LKKC. The 224-residue stretch at 157 to 380 folds into the NR LBD domain; it reads PVSELIAQLL…TLIRDMLLSG (224 aa). An important for dimerization region spans residues 314 to 390; the sequence is LQEKAQVALT…STFNWPYGSG (77 aa).

Belongs to the nuclear hormone receptor family. NR2 subfamily. In terms of assembly, binds DNA as dimer; homodimer and heterodimer with NR2F2 and probably NR2F1. Interacts with THRB.

The protein resides in the nucleus. Its function is as follows. Transcription factor predominantly involved in transcriptional repression. Binds to promoter/enhancer response elements that contain the imperfect 5'-AGGTCA-3' direct or inverted repeats with various spacings which are also recognized by other nuclear hormone receptors. Involved in modulation of hormonal responses. Represses transcriptional activity of the lutropin-choriogonadotropic hormone receptor/LHCGR gene, the renin/REN gene and the oxytocin-neurophysin/OXT gene. Represses the triiodothyronine-dependent and -independent transcriptional activity of the thyroid hormone receptor gene in a cell type-specific manner. The corepressing function towards thyroid hormone receptor beta/THRB involves at least in part the inhibition of THRB binding to triiodothyronine response elements (TREs) by NR2F6. Inhibits NFATC transcription factor DNA binding and subsequently its transcriptional activity. Acts as transcriptional repressor of IL-17 expression in Th-17 differentiated CD4(+) T cells and may be involved in induction and/or maintenance of peripheral immunological tolerance and autoimmunity. Involved in development of forebrain circadian clock; is required early in the development of the locus coeruleus (LC). The sequence is that of Nuclear receptor subfamily 2 group F member 6 (Nr2f6) from Rattus norvegicus (Rat).